The chain runs to 567 residues: Hexose transporter HXT16 (567 aa).

Residues 1–19 (MASEQSSPEINADNLNSSA) are compositionally biased toward polar residues. Positions 1-32 (MASEQSSPEINADNLNSSAADVHVQPPGEKEW) are disordered. Residues 1–55 (MASEQSSPEINADNLNSSAADVHVQPPGEKEWSDGFYDKEVINGNTPDAPKRGFL) are Cytoplasmic-facing. Residues 56–76 (GYLIIYLLCYPVSFGGFLPGW) form a helical membrane-spanning segment. At 77-112 (DSGITAGFINMDNFKMNFGSYKHSTGEYYLSNVRMG) the chain is on the extracellular side. A helical transmembrane segment spans residues 113-133 (LLVAMFSVGCSIGGVAFARLA). The Cytoplasmic portion of the chain corresponds to 134–139 (DTLGRR). A helical transmembrane segment spans residues 140-160 (LAIVIVVLVYMVGAIIQISSN). The Extracellular segment spans residues 161–170 (HKWYQYFVGK). The helical transmembrane segment at 171–191 (IIYGLGAGGCSVLCPMLLSEI) threads the bilayer. Topologically, residues 192 to 197 (APTDLR) are cytoplasmic. A helical transmembrane segment spans residues 198–218 (GGLVSLYQLNMTFGIFLGYCS). The Extracellular portion of the chain corresponds to 219–232 (VYGTRKYSNTAQWR). A helical membrane pass occupies residues 233–253 (IPVGLCFLWALIIIVGMLLVP). Over 254-336 (ESPRYLIECE…VQTFLQLTGE (83 aa)) the chain is Cytoplasmic. The chain crosses the membrane as a helical span at residues 337 to 353 (NYFFFYGTTIFKSVGLT). The Extracellular portion of the chain corresponds to 354 to 359 (DGFETS). A helical transmembrane segment spans residues 360–377 (IVLGTVNFFSTIIAVMVV). At 378–384 (DKIGRRK) the chain is on the cytoplasmic side. A helical membrane pass occupies residues 385-405 (CLLFGAASMMACMVIFASIGV). Topologically, residues 406 to 427 (KCLYPHGQDGPSSKGAGNAMIV) are extracellular. Residues 428-448 (FTCFYIFCFATTWAPVAYIVV) form a helical membrane-spanning segment. Residues 449-465 (AESFPSKVKSKAMSIST) lie on the Cytoplasmic side of the membrane. Residues 466-486 (AFNWLWQFLIGFFTPFITGSI) form a helical membrane-spanning segment. Position 487 (H487) is a topological domain, extracellular. A helical transmembrane segment spans residues 488–508 (FYYGYVFVGCLVAMFLYVFFF). The Cytoplasmic segment spans residues 509-567 (LPETIGLSLEETQLLYEEGIKPWKSASWVPPSRRGASSRETEAKKKSWKEVLKFPKSFN). The segment at 533 to 555 (SASWVPPSRRGASSRETEAKKKS) is disordered. Positions 545–555 (SSRETEAKKKS) are enriched in basic and acidic residues.

Belongs to the major facilitator superfamily. Sugar transporter (TC 2.A.1.1) family.

It localises to the membrane. Its function is as follows. Probable glucose transporter. This chain is Hexose transporter HXT16 (HXT16), found in Saccharomyces cerevisiae (strain ATCC 204508 / S288c) (Baker's yeast).